We begin with the raw amino-acid sequence, 383 residues long: Chitinase-3-like protein 1 (383 aa).

The N-terminal stretch at 1 to 21 (MGLRVAQTGFVVLVLLQSCAA) is a signal peptide. In terms of domain architecture, GH18 spans 22 to 383 (YKLICYYTSW…NAIKDVLAGV (362 aa)). An intrachain disulfide couples Cys-26 to Cys-51. N-linked (GlcNAc...) asparagine glycosylation is present at Asn-60. Residues 70-71 (EW), 97-100 (GGWN), Tyr-141, 204-207 (LTYD), and Lys-263 contribute to the chitin site. Cys-300 and Cys-364 are joined by a disulfide. An important for AKT1 activation and IL8 production region spans residues 324 to 338 (QWVAYDDQESVKNKA). Trp-352 contacts chitin.

This sequence belongs to the glycosyl hydrolase 18 family. Monomer. Detected in mammary gland.

Its subcellular location is the secreted. It is found in the extracellular space. The protein localises to the cytoplasm. It localises to the perinuclear region. The protein resides in the endoplasmic reticulum. In terms of biological role, carbohydrate-binding lectin with a preference for chitin. Has no chitinase activity. May play a role in tissue remodeling and in the capacity of cells to respond to and cope with changes in their environment. Plays a role in T-helper cell type 2 (Th2) inflammatory response and IL-13-induced inflammation, regulating allergen sensitization, inflammatory cell apoptosis, dendritic cell accumulation and M2 macrophage differentiation. Facilitates invasion of pathogenic enteric bacteria into colonic mucosa and lymphoid organs. Mediates activation of AKT1 signaling pathway and subsequent IL8 production in colonic epithelial cells. Regulates antibacterial responses in lung by contributing to macrophage bacterial killing, controlling bacterial dissemination and augmenting host tolerance. Also regulates hyperoxia-induced injury, inflammation and epithelial apoptosis in lung. The protein is Chitinase-3-like protein 1 (CHI3L1) of Bubalus bubalis (Domestic water buffalo).